The chain runs to 84 residues: Metallothionein-like protein 4A (84 aa).

The interval 1-26 (MADTGKGSSVAGCNDSCGCPSPCPGG) is disordered.

This sequence belongs to the metallothionein superfamily. Type 15 family. As to expression, expressed specifically in seeds.

Its subcellular location is the cytoplasm. The protein localises to the nucleus. It localises to the cell membrane. In terms of biological role, metallothioneins have a high content of cysteine residues that bind various heavy metals. Functions as a metal chelator of copper (Cu) and zinc (Zn). Plays a role in storing and distributing Zn ion in seed. This Arabidopsis thaliana (Mouse-ear cress) protein is Metallothionein-like protein 4A (MT4A).